A 103-amino-acid polypeptide reads, in one-letter code: Large ribosomal subunit protein bL21 (103 aa).

Belongs to the bacterial ribosomal protein bL21 family. Part of the 50S ribosomal subunit. Contacts protein L20.

Functionally, this protein binds to 23S rRNA in the presence of protein L20. This Chloroflexus aggregans (strain MD-66 / DSM 9485) protein is Large ribosomal subunit protein bL21.